The chain runs to 113 residues: Large ribosomal subunit protein bL19 (113 aa).

This sequence belongs to the bacterial ribosomal protein bL19 family.

Functionally, this protein is located at the 30S-50S ribosomal subunit interface and may play a role in the structure and function of the aminoacyl-tRNA binding site. The protein is Large ribosomal subunit protein bL19 of Rhodococcus erythropolis (strain PR4 / NBRC 100887).